The following is a 297-amino-acid chain: Phosphatidylglycerol--prolipoprotein diacylglyceryl transferase (297 aa).

4 helical membrane passes run 20-40, 50-70, 105-125, and 133-153; these read FLTI…GLFV, INPL…IIGA, AVWE…LSII, and IHLK…QSIG. Arginine 154 lines the a 1,2-diacyl-sn-glycero-3-phospho-(1'-sn-glycerol) pocket. Transmembrane regions (helical) follow at residues 193 to 213, 225 to 245, and 266 to 286; these read PTFL…IFVF, GFIS…IEGL, and AQFI…FLRL.

It belongs to the Lgt family.

It localises to the cell inner membrane. It carries out the reaction L-cysteinyl-[prolipoprotein] + a 1,2-diacyl-sn-glycero-3-phospho-(1'-sn-glycerol) = an S-1,2-diacyl-sn-glyceryl-L-cysteinyl-[prolipoprotein] + sn-glycerol 1-phosphate + H(+). Its pathway is protein modification; lipoprotein biosynthesis (diacylglyceryl transfer). Its function is as follows. Catalyzes the transfer of the diacylglyceryl group from phosphatidylglycerol to the sulfhydryl group of the N-terminal cysteine of a prolipoprotein, the first step in the formation of mature lipoproteins. In Prochlorococcus marinus (strain MIT 9312), this protein is Phosphatidylglycerol--prolipoprotein diacylglyceryl transferase.